Here is a 385-residue protein sequence, read N- to C-terminus: Probable protein phosphatase 2C 79 (385 aa).

An N-terminal signal peptide occupies residues 1–18 (MLSLFFNFLTSCLWPSSS). One can recognise a PPM-type phosphatase domain in the interval 47–356 (DFSMAVVQAN…DDITVVVLFL (310 aa)). Residue S76 is modified to Phosphoserine. Residues D87, G88, D288, and D347 each contribute to the Mn(2+) site.

This sequence belongs to the PP2C family. Mg(2+) is required as a cofactor. It depends on Mn(2+) as a cofactor.

The enzyme catalyses O-phospho-L-seryl-[protein] + H2O = L-seryl-[protein] + phosphate. It catalyses the reaction O-phospho-L-threonyl-[protein] + H2O = L-threonyl-[protein] + phosphate. Its function is as follows. May dephosphorylate and repress plasma membrane H(+)-ATPases (PM H(+)-ATPases, e.g. AHA1 and AHA2), thus influencing negatively plant growth and fitness. The polypeptide is Probable protein phosphatase 2C 79 (Arabidopsis thaliana (Mouse-ear cress)).